Reading from the N-terminus, the 416-residue chain is Serine hydroxymethyltransferase (416 aa).

Residues Leu121 and 125–127 (GHL) each bind (6S)-5,6,7,8-tetrahydrofolate. Position 230 is an N6-(pyridoxal phosphate)lysine (Lys230). 355–357 (SPF) serves as a coordination point for (6S)-5,6,7,8-tetrahydrofolate.

This sequence belongs to the SHMT family. As to quaternary structure, homodimer. Pyridoxal 5'-phosphate serves as cofactor.

The protein localises to the cytoplasm. The catalysed reaction is (6R)-5,10-methylene-5,6,7,8-tetrahydrofolate + glycine + H2O = (6S)-5,6,7,8-tetrahydrofolate + L-serine. It functions in the pathway one-carbon metabolism; tetrahydrofolate interconversion. Its pathway is amino-acid biosynthesis; glycine biosynthesis; glycine from L-serine: step 1/1. Functionally, catalyzes the reversible interconversion of serine and glycine with tetrahydrofolate (THF) serving as the one-carbon carrier. This reaction serves as the major source of one-carbon groups required for the biosynthesis of purines, thymidylate, methionine, and other important biomolecules. Also exhibits THF-independent aldolase activity toward beta-hydroxyamino acids, producing glycine and aldehydes, via a retro-aldol mechanism. This is Serine hydroxymethyltransferase from Streptococcus thermophilus (strain ATCC BAA-250 / LMG 18311).